Reading from the N-terminus, the 218-residue chain is Phosphatidylserine decarboxylase proenzyme (218 aa).

The active-site Schiff-base intermediate with substrate; via pyruvic acid is the Ser-183. Ser-183 is subject to Pyruvic acid (Ser); by autocatalysis.

This sequence belongs to the phosphatidylserine decarboxylase family. PSD-A subfamily. As to quaternary structure, heterodimer of a large membrane-associated beta subunit and a small pyruvoyl-containing alpha subunit. It depends on pyruvate as a cofactor. Is synthesized initially as an inactive proenzyme. Formation of the active enzyme involves a self-maturation process in which the active site pyruvoyl group is generated from an internal serine residue via an autocatalytic post-translational modification. Two non-identical subunits are generated from the proenzyme in this reaction, and the pyruvate is formed at the N-terminus of the alpha chain, which is derived from the carboxyl end of the proenzyme. The post-translation cleavage follows an unusual pathway, termed non-hydrolytic serinolysis, in which the side chain hydroxyl group of the serine supplies its oxygen atom to form the C-terminus of the beta chain, while the remainder of the serine residue undergoes an oxidative deamination to produce ammonia and the pyruvoyl prosthetic group on the alpha chain.

The protein resides in the cell membrane. It catalyses the reaction a 1,2-diacyl-sn-glycero-3-phospho-L-serine + H(+) = a 1,2-diacyl-sn-glycero-3-phosphoethanolamine + CO2. Its pathway is phospholipid metabolism; phosphatidylethanolamine biosynthesis; phosphatidylethanolamine from CDP-diacylglycerol: step 2/2. Catalyzes the formation of phosphatidylethanolamine (PtdEtn) from phosphatidylserine (PtdSer). This Magnetococcus marinus (strain ATCC BAA-1437 / JCM 17883 / MC-1) protein is Phosphatidylserine decarboxylase proenzyme.